Consider the following 88-residue polypeptide: Pigment dispersing factor homolog pdf-1 (88 aa).

The signal sequence occupies residues 1–21; the sequence is MNRFIISMIALLAVFCAVSTA.

The protein localises to the secreted. In terms of biological role, probable ligand of isoforms a and b of the calcitonin receptor-like protein, pdfr-1, a G-protein coupled receptor. May not signal through isoform c of pdfr-1. Involved in locomotion; more specifically mate searching behavior of males, independent of nutritional status. Involved in regulating the male-specific expression of TGFbeta-like daf-7 in the ASJ chemosensory neurons. Plays a role in circadian rhythms of locomotor activity. Involved in mediating arousal from the sleep-like state called lethargus, which occurs during molting between larval and adult stages, in part by regulating touch sensitivity, and working in concert with neuropeptide flp-2. In the presence of food, plays a role in initiating and extending exploratory roaming behavior, in opposition to 5-hydroxytryptamine (serotonin) signaling. The polypeptide is Pigment dispersing factor homolog pdf-1 (Caenorhabditis elegans).